A 360-amino-acid chain; its full sequence is UDP-N-acetylglucosamine--N-acetylmuramyl-(pentapeptide) pyrophosphoryl-undecaprenol N-acetylglucosamine transferase (360 aa).

UDP-N-acetyl-alpha-D-glucosamine is bound by residues S198 and Q289.

The protein belongs to the glycosyltransferase 28 family. MurG subfamily.

It is found in the cell membrane. It carries out the reaction Mur2Ac(oyl-L-Ala-gamma-D-Glu-L-Lys-D-Ala-D-Ala)-di-trans,octa-cis-undecaprenyl diphosphate + UDP-N-acetyl-alpha-D-glucosamine = beta-D-GlcNAc-(1-&gt;4)-Mur2Ac(oyl-L-Ala-gamma-D-Glu-L-Lys-D-Ala-D-Ala)-di-trans,octa-cis-undecaprenyl diphosphate + UDP + H(+). The protein operates within cell wall biogenesis; peptidoglycan biosynthesis. Cell wall formation. Catalyzes the transfer of a GlcNAc subunit on undecaprenyl-pyrophosphoryl-MurNAc-pentapeptide (lipid intermediate I) to form undecaprenyl-pyrophosphoryl-MurNAc-(pentapeptide)GlcNAc (lipid intermediate II). In Streptococcus pyogenes serotype M12 (strain MGAS2096), this protein is UDP-N-acetylglucosamine--N-acetylmuramyl-(pentapeptide) pyrophosphoryl-undecaprenol N-acetylglucosamine transferase.